The sequence spans 308 residues: RNA pseudouridylate synthase domain-containing protein 1 (308 aa).

At Met-1 the chain carries N-acetylmethionine. The active site involves Asp-67. Residues 257-292 (APDPDPSEGGPGPCSPCTPLPGPGRPPPPPETEVQR) form a disordered region. Residues 269 to 287 (PCSPCTPLPGPGRPPPPPE) show a composition bias toward pro residues.

Belongs to the pseudouridine synthase RluA family.

The protein is RNA pseudouridylate synthase domain-containing protein 1 (RPUSD1) of Bos taurus (Bovine).